Reading from the N-terminus, the 294-residue chain is MVQSATEYGILVGVDSSAESDAAVRWAAREASLHDAPITLMHVIAPVVVSWPAGPYMATVLECQEENARHAIEQAQKVVADCLGETHGLTVQTEIRKESVARTLIDASKSAQMVVVGNRGMGALGRVLLGSTSTSLLHYASGPVVVVHGDDQAAHDSRLPVLLGIDGSPASEVATSHAFDEASRRGVDLVALHVWIDVGDIPPIGPTWEEQEETGRALLAERLAGWQERYPDVKVHRRVERAQPAYWLLEEAKQAQLVVVGSHGRGGFTGMLLGSVSSRVAQSATTPVMVVRPR.

Position 13 (glycine 13) interacts with ATP. Residue lysine 109 forms an Isoglutamyl lysine isopeptide (Lys-Gln) (interchain with Q-Cter in protein Pup) linkage. Residues 117–123, 131–132, glycine 164, aspartate 197, 261–267, and 275–277 contribute to the ATP site; these read GNRGMGA, ST, GSHGRGG, and SVS.

It belongs to the universal stress protein A family.

The protein is Universal stress protein MSMEG_3950/MSMEI_3859 of Mycolicibacterium smegmatis (strain ATCC 700084 / mc(2)155) (Mycobacterium smegmatis).